The following is a 156-amino-acid chain: Persephin (156 aa).

The first 21 residues, 1–21 (MAAGRLRILCLLLLSLHPSLG), serve as a signal peptide directing secretion. Disulfide bonds link C66-C124, C93-C152, and C97-C154.

The protein belongs to the TGF-beta family. GDNF subfamily. In terms of assembly, homodimer; disulfide-linked. Interacts with GFRA4 coreceptor and RET: forms a 2:2:2 ternary complex composed of PSPN ligand, GFRA4 and RET receptor.

It is found in the secreted. Growth factor that exhibits neurotrophic activity on mesencephalic dopaminergic and motor neurons. Acts by binding to its coreceptor, GFRA4, leading to autophosphorylation and activation of the RET receptor. The protein is Persephin of Mus musculus (Mouse).